The sequence spans 431 residues: 3-phosphoshikimate 1-carboxyvinyltransferase (431 aa).

3-phosphoshikimate-binding residues include Lys22, Ser23, and Arg27. Lys22 is a binding site for phosphoenolpyruvate. Gly94 and Arg122 together coordinate phosphoenolpyruvate. 4 residues coordinate 3-phosphoshikimate: Ser167, Gln169, Asp314, and Lys341. Gln169 contacts phosphoenolpyruvate. Catalysis depends on Asp314, which acts as the Proton acceptor. Phosphoenolpyruvate is bound by residues Arg345 and Arg391.

The protein belongs to the EPSP synthase family. In terms of assembly, monomer.

It localises to the cytoplasm. It catalyses the reaction 3-phosphoshikimate + phosphoenolpyruvate = 5-O-(1-carboxyvinyl)-3-phosphoshikimate + phosphate. Its pathway is metabolic intermediate biosynthesis; chorismate biosynthesis; chorismate from D-erythrose 4-phosphate and phosphoenolpyruvate: step 6/7. In terms of biological role, catalyzes the transfer of the enolpyruvyl moiety of phosphoenolpyruvate (PEP) to the 5-hydroxyl of shikimate-3-phosphate (S3P) to produce enolpyruvyl shikimate-3-phosphate and inorganic phosphate. This is 3-phosphoshikimate 1-carboxyvinyltransferase from Leuconostoc citreum (strain KM20).